Consider the following 593-residue polypeptide: MVNDASSISRSGYTQNPRLAEAAFEGVRKNTDFLKAADKAFKDVVATKAGDLKAGTKSGESAINTVGLKPPTDAAREKLSSEGQLTLLLGKLMTLLGDVSLSQLESRLAVWQAMIESQKEMGIQVSKEFQTALGEAQEATDLYEASIKKTDTAKSVYDAAAKKLTQAQNKLQSLDPADPGYAQAEAAVEQAGKEATEAKEALDKATDATVKAGTDAKAKAEKADNILTKFQGTANAASQNQVSQGEQDNLSNVARLTMLMAMFIEIVGKNTEESLQNDLALFNALQEGRQAEMEKKSAEFQEETRKAEETNRIMGCIGKVLGALLTIVSVVAAVFTGGASLALAAVGLAVMVADEIVKAATGVSFIQQALNPIMEHVLKPLMELIGKAITKALEGLGVDKKTAEMAGSIVGAIVAAIAMVAVIVVVAVVGKGAAAKLGNALSKMMGETIKKLVPNVLKQLAQNGSKLFTQGMQRITSGLGNVGSKMGLQTNALSKELVGNTLNKVALGMEVTNTAAQSAGGVAEGVFIKNASEALADFMLARFAMDQIQQWLKQSVEIFGENQKVTAELQKAMSSAVQQNADASRFILRQSRA.

Coiled coils occupy residues Asp-151–Ala-208 and Glu-287–Met-314. 2 helical membrane passes run Val-330 to Val-350 and Ile-409 to Val-429.

It belongs to the SctE/SipB/YopB family. In terms of assembly, the core secretion machinery of the T3SS is composed of approximately 20 different proteins, including cytoplasmic components, a base, an export apparatus and a needle. This subunit is involved in the formation of a pore, called the translocon, in host membrane.

It is found in the secreted. The protein localises to the host membrane. It localises to the host cell. In terms of biological role, component of the type III secretion system 1 (SPI-1 T3SS), also called injectisome, which is used to inject bacterial effector proteins into eukaryotic host cells. SipB/SctE1 and SipC/SctB are inserted into the host membrane where they form a pore and allow the translocation of effector proteins into the cytosol of target cells. Induces macrophage apoptosis either by binding and activating the proapoptotic enzyme caspase-1 (caspase-1 dependent), resulting in the release of interleukin-1 beta active form, or by disrupting mitochondria and inducing autophagy (caspase-1 independent). The former is dependent of its membrane-fusion activity. This chain is SPI-1 type 3 secretion system translocon protein SctE, found in Salmonella typhi.